The sequence spans 346 residues: L-threonine dehydratase catabolic TdcB (346 aa).

59–60 (FT) contacts AMP. K64 bears the N6-(pyridoxal phosphate)lysine mark. AMP-binding positions include Q94, 125–126 (GY), and N321.

This sequence belongs to the serine/threonine dehydratase family. In terms of assembly, in the native structure, TdcB is in a dimeric form, whereas in the TdcB-AMP complex, it exists in a tetrameric form (dimer of dimers). The cofactor is pyridoxal 5'-phosphate.

The catalysed reaction is L-threonine = 2-oxobutanoate + NH4(+). Its pathway is amino-acid degradation; L-threonine degradation via propanoate pathway; propanoate from L-threonine: step 1/4. With respect to regulation, each protein molecule can bind up to four molecules of AMP, which act as an allosteric activator to the enzyme. In terms of biological role, catalyzes the anaerobic formation of alpha-ketobutyrate and ammonia from threonine in a two-step reaction. The first step involved a dehydration of threonine and a production of enamine intermediates (aminocrotonate), which tautomerizes to its imine form (iminobutyrate). Both intermediates are unstable and short-lived. The second step is the nonenzymatic hydrolysis of the enamine/imine intermediates to form 2-ketobutyrate and free ammonia. In the low water environment of the cell, the second step is accelerated by RidA. The polypeptide is L-threonine dehydratase catabolic TdcB (tdcB) (Staphylococcus aureus (strain bovine RF122 / ET3-1)).